We begin with the raw amino-acid sequence, 356 residues long: DNA polymerase IV (356 aa).

Residues 7 to 188 (IIHIDMDAFY…IPVTKFYGVG (182 aa)) form the UmuC domain. The Mg(2+) site is built by Asp-11 and Asp-106. Glu-107 is an active-site residue.

It belongs to the DNA polymerase type-Y family. As to quaternary structure, monomer. It depends on Mg(2+) as a cofactor.

The protein localises to the cytoplasm. The enzyme catalyses DNA(n) + a 2'-deoxyribonucleoside 5'-triphosphate = DNA(n+1) + diphosphate. In terms of biological role, poorly processive, error-prone DNA polymerase involved in untargeted mutagenesis. Copies undamaged DNA at stalled replication forks, which arise in vivo from mismatched or misaligned primer ends. These misaligned primers can be extended by PolIV. Exhibits no 3'-5' exonuclease (proofreading) activity. May be involved in translesional synthesis, in conjunction with the beta clamp from PolIII. The polypeptide is DNA polymerase IV (Listeria monocytogenes serotype 4b (strain CLIP80459)).